Here is a 211-residue protein sequence, read N- to C-terminus: LexA repressor (211 aa).

Residues 35-55 (RAEIANFFGFKSANAAEEHLK) constitute a DNA-binding region (H-T-H motif). Catalysis depends on for autocatalytic cleavage activity residues serine 128 and lysine 165.

Belongs to the peptidase S24 family. Homodimer.

The catalysed reaction is Hydrolysis of Ala-|-Gly bond in repressor LexA.. Represses a number of genes involved in the response to DNA damage (SOS response), including recA and lexA. In the presence of single-stranded DNA, RecA interacts with LexA causing an autocatalytic cleavage which disrupts the DNA-binding part of LexA, leading to derepression of the SOS regulon and eventually DNA repair. The polypeptide is LexA repressor (Colwellia psychrerythraea (strain 34H / ATCC BAA-681) (Vibrio psychroerythus)).